We begin with the raw amino-acid sequence, 303 residues long: MTDLPFTLDQLRIFQAIVVEGSFQKAAQSLYISQPAVSLQIQNLEQQLNAPLFDRSHRKAKLTEAGQVFFKYASRILALCEETCRALEDLHHLQAGSLIIGASQTIGTYLMPGLIGLFRQKYPHICVQLQVHSTRRIAWSVAKGHIDVAVIGGAIPTELIPLLSIQPFAEDELTLIVPPDHPFARLSKIQKEDLYRLRFVSLDRHSTIRKVIDQILHQNGIDTNRLKMEMELNSIEAIKNAVQWGLGAAFVSVCAIAKELELNLVREVEIEAISIKRQLYQITNPNRYQSKAAFTFCQQMLNV.

The region spanning 6-63 is the HTH lysR-type domain; the sequence is FTLDQLRIFQAIVVEGSFQKAAQSLYISQPAVSLQIQNLEQQLNAPLFDRSHRKAKLT. A DNA-binding region (H-T-H motif) is located at residues 23-42; the sequence is FQKAAQSLYISQPAVSLQIQ.

It belongs to the LysR transcriptional regulatory family.

The protein resides in the plastid. The protein localises to the chloroplast. Functionally, trans-acting transcriptional regulator of RuBisCO genes (rbcL and rbcS) expression. The polypeptide is Probable RuBisCO transcriptional regulator (rbcR) (Cyanidioschyzon merolae (strain NIES-3377 / 10D) (Unicellular red alga)).